The sequence spans 48 residues: MFKRKSTAELAAQMAKLNGNKGFSSEDKGEWKLKLDNAGNGQAVIRFL.

As to quaternary structure, homodimer in the absence of DNA, monomer when binding DNA.

In terms of biological role, binds preferentially to single-stranded DNA and therefore, destabilizes double-stranded DNA. It is involved in DNA replication, repair and recombination. Binds ss-DNA as the replication fork advances and stimulates the replisome processivity and accuracy. This Enterobacteria phage FSalpha (Bacteriophage FS-alpha) protein is Single-stranded DNA-binding protein (32).